The chain runs to 202 residues: Transcription factor IBH1 (202 aa).

The span at methionine 1–asparagine 16 shows a compositional bias: pro residues. The segment at methionine 1–arginine 33 is disordered. A bHLH domain is found at threonine 136–leucine 185.

Belongs to the bHLH protein family. Interacts with ILI1. Binds to ILI5/BUL1 and BC1. Interacts with BCL1 and BCL2. As to expression, highly expressed in roots and at lower levels in leaf blades, leaf sheaths, lamina joint, stems and panicles.

Functionally, atypical and probable non DNA-binding bHLH transcription factor that acts as a negative regulator of cell elongation and plant development. Binds the transcription factor ILI1 and forms a heterodimer of antagonistic bHLH transcription factors that function downstream of BZR1 to mediate brassinosteroid regulation of cell elongation and lamina inclination. This Oryza sativa subsp. japonica (Rice) protein is Transcription factor IBH1.